Reading from the N-terminus, the 367-residue chain is MISSAPLILLAAGGTGGHLFPAEALGVELIKRGYRVRLVTDARALKYSGLFTKDMIDVVPSETVRSRSPVALARTALLLGTGTLAAFNLMRRLKPAAVIGFGGYPTVPPLLAARLAGVPSLIHDANAVLGRANRFLSAHVKAIATSLPGVLDRDPALAGKTTTVGTPMRPAILEAAAVPYVAPETAGPLRLLVVGGSQGARVMSDIVPGAIERLEPALWSRLVLAQQVRQEDMARVRAVYDRLKINAELQPFFTDLPARLAANHLVISRSGAGTVAELAAIGRPSILVPLPGAIDQDQFANAGVLSDANAAIRIVQTAFTSDRLASEISSLAAEPTRLAAMAQAARAAGRLDAAERLADLVAKTAGL.

UDP-N-acetyl-alpha-D-glucosamine contacts are provided by residues 15–17 (TGG), asparagine 126, arginine 169, serine 197, and glutamine 298.

This sequence belongs to the glycosyltransferase 28 family. MurG subfamily.

The protein resides in the cell inner membrane. It carries out the reaction di-trans,octa-cis-undecaprenyl diphospho-N-acetyl-alpha-D-muramoyl-L-alanyl-D-glutamyl-meso-2,6-diaminopimeloyl-D-alanyl-D-alanine + UDP-N-acetyl-alpha-D-glucosamine = di-trans,octa-cis-undecaprenyl diphospho-[N-acetyl-alpha-D-glucosaminyl-(1-&gt;4)]-N-acetyl-alpha-D-muramoyl-L-alanyl-D-glutamyl-meso-2,6-diaminopimeloyl-D-alanyl-D-alanine + UDP + H(+). It participates in cell wall biogenesis; peptidoglycan biosynthesis. Cell wall formation. Catalyzes the transfer of a GlcNAc subunit on undecaprenyl-pyrophosphoryl-MurNAc-pentapeptide (lipid intermediate I) to form undecaprenyl-pyrophosphoryl-MurNAc-(pentapeptide)GlcNAc (lipid intermediate II). This Bradyrhizobium sp. (strain ORS 278) protein is UDP-N-acetylglucosamine--N-acetylmuramyl-(pentapeptide) pyrophosphoryl-undecaprenol N-acetylglucosamine transferase.